The sequence spans 157 residues: Small ribosomal subunit protein uS7 (157 aa).

This sequence belongs to the universal ribosomal protein uS7 family. As to quaternary structure, part of the 30S ribosomal subunit. Contacts proteins S9 and S11.

In terms of biological role, one of the primary rRNA binding proteins, it binds directly to 16S rRNA where it nucleates assembly of the head domain of the 30S subunit. Is located at the subunit interface close to the decoding center, probably blocks exit of the E-site tRNA. The protein is Small ribosomal subunit protein uS7 of Delftia acidovorans (strain DSM 14801 / SPH-1).